The chain runs to 379 residues: Chaperone protein DnaJ (379 aa).

Residues 5–70 (DFYEVLGVSR…QKRSAYDQYG (66 aa)) enclose the J domain. Residues 134-212 (GCDKEIEVPT…CHGEGRVHKT (79 aa)) form a CR-type zinc finger. Zn(2+) is bound by residues C147, C150, C164, C167, C186, C189, C200, and C203. CXXCXGXG motif repeat units lie at residues 147-154 (CDPCEGTG), 164-171 (CSTCHGQG), 186-193 (CPTCHGKG), and 200-207 (CNSCHGEG).

This sequence belongs to the DnaJ family. In terms of assembly, homodimer. Zn(2+) serves as cofactor.

The protein resides in the cytoplasm. Participates actively in the response to hyperosmotic and heat shock by preventing the aggregation of stress-denatured proteins and by disaggregating proteins, also in an autonomous, DnaK-independent fashion. Unfolded proteins bind initially to DnaJ; upon interaction with the DnaJ-bound protein, DnaK hydrolyzes its bound ATP, resulting in the formation of a stable complex. GrpE releases ADP from DnaK; ATP binding to DnaK triggers the release of the substrate protein, thus completing the reaction cycle. Several rounds of ATP-dependent interactions between DnaJ, DnaK and GrpE are required for fully efficient folding. Also involved, together with DnaK and GrpE, in the DNA replication of plasmids through activation of initiation proteins. This chain is Chaperone protein DnaJ, found in Aliivibrio fischeri (strain ATCC 700601 / ES114) (Vibrio fischeri).